We begin with the raw amino-acid sequence, 1722 residues long: MGNQDGKLKRSAGDALHEGGGGAEDALGPRDVEATKKGSGGKKALGKHGKGGGGGGGGGESGKKKSKSDSRASVFSNLRIRKNLSKGKGAGGSREDVLDSQALQTGELDSAHSLLTKTPDLSLSADEAGLSDTECADPFEVTGPGGPGPAEARVGGRPIAEDVETAAGAQDGQRTSSGSDTDIYSFHSATEQEDLLSDIQQAIRLQQQQQQQLQLQLQQQQQQQQLQGAEEPAAPPTAVSPQPGAFLGLDRFLLGPSGGAGEAPGSPDTEQALSALSDLPESLAAEPREPQQPPSPGGLPVSEAPSLPAAQPAAKDSPSSTAFPFPEAGPGEEAAGAPVRGAGDTDEEGEEDAFEDAPRGSPGEEWAPEVGEDAPQRLGEEPEEEAQGPDAPAAASLPGSPAPSQRCFKPYPLITPCYIKTTTRQLSSPNHSPSQSPNQSPRIKRRPEPSLSRGSRTALASVAAPAKKHRADGGLAAGLSRSADWTEELGARTPRVGGSAHLLERGVASDSGGGVSPALAAKASGAPAAADGFQNVFTGRTLLEKLFSQQENGPPEEAEKFCSRIIAMGLLLPFSDCFREPCNQNAQTNAASFDQDQLYTWAAVSQPTHSLDYSEGQFPRRVPSMGPPSKPPDEEHRLEDAETESQSAVSETPQKRSDAVQKEVVDMKSEGQATVIQQLEQTIEDLRTKIAELERQYPALDTEVASGHQGLENGVTASGDVCLEALRLEEKEVRHHRILEAKSIQTSPTEEGGVLTLPPVDGLPGRPPCPPGAESGPQTKFCSEISLIVSPRRISVQLDSHQPTQSISQPPPPPSLLWSAGQGQPGSQPPHSISTEFQTSHEHSVSSAFKNSCNIPSPPPLPCTESSSSMPGLGMVPPPPPPLPGMTVPTLPSTAIPQPPPLQGTEMLPPPPPPLPGAGIPPPPPLPGAGILPLPPLPGAGIPPPPPLPGAAIPPPPPLPGAGIPLPPPLPGAGIPPPPPLPGAGIPPPPPLPGAGIPPPPPLPGAGIPPPPPLPGAGIPPPPPLPGAGIPPPPPLPGAGIPPPPPLPGAGIPPPPPLPGAGIPPPPPLPGAGIPPPPPLPGAGIPPPPPLPGAGIPPPPPLPGVGIPPPPPLPGAGIPPPPPLPGAGIPPPPPLPGAGIPPPPPLPRVGIPPPPPLPGAGIPPPPPLPGAGIPPPPPLPGVGIPPPPPLPGVGIPPPPPLPGAGIPPPPPLPGMGIPPAPAPPLPPPGTGIPPPPLLPVSGPPLLPQVGSSTLPTPQVCGFLPPPLPSGLFGLGMNQDKGSRKQPIEPCRPMKPLYWTRIQLHSKRDSSTSLIWEKIEEPSIDCHEFEELFSKTAVKERKKPISDTISKTKAKQVVKLLSNKRSQAVGILMSSLHLDMKDIQHAVVNLDNSVVDLETLQALYENRAQSDELEKIEKHGRSSKDKENAKSLDKPEQFLYELSLIPNFSERVFCILFQSTFSESICSIRRKLELLQKLCETLKNGPGVMQVLGLVLAFGNYMNGGNKTRGQADGFGLDILPKLKDVKSSDNSRSLLSYIVSYYLRNFDEDAGKEQCLFPLPEPQDLFQASQMKFEDFQKDLRKLKKDLKACEVEAGKVYQVSSKEHMQPFKENMEQFIIQAKIDQEAEENSLTETHKCFLETTAYFFMKPKLGEKEVSPNAFFSIWHEFSSDFKDFWKKENKLLLQERVKEAEEVCRQKKGKSLYKIKPRHDSGIKAKISMKT.

Composition is skewed to basic and acidic residues over residues 1–17 (MGNQ…DALH) and 27–36 (LGPRDVEATK). 3 disordered regions span residues 1 to 104 (MGNQ…QALQ), 126 to 189 (DEAG…FHSA), and 207 to 475 (QQQQ…DGGL). Positions 51–60 (GGGGGGGGGE) are enriched in gly residues. Residues 61–70 (SGKKKSKSDS) are compositionally biased toward basic and acidic residues. Ser-93 carries the phosphoserine modification. Positions 172–182 (GQRTSSGSDTD) are enriched in polar residues. Residues 193–231 (EDLLSDIQQAIRLQQQQQQQLQLQLQQQQQQQQLQGAEE) are a coiled coil. 2 stretches are compositionally biased toward low complexity: residues 207–227 (QQQQ…QQLQ) and 322–342 (AFPF…VRGA). Over residues 344–355 (DTDEEGEEDAFE) the composition is skewed to acidic residues. Low complexity-rich tracts occupy residues 389–404 (PDAP…PAPS) and 427–441 (SSPN…NQSP). 2 positions are modified to phosphoserine: Ser-482 and Ser-516. The tract at residues 612-663 (DYSEGQFPRRVPSMGPPSKPPDEEHRLEDAETESQSAVSETPQKRSDAVQKE) is disordered. Composition is skewed to basic and acidic residues over residues 631-640 (PPDEEHRLED) and 653-663 (PQKRSDAVQKE). Positions 670–706 (EGQATVIQQLEQTIEDLRTKIAELERQYPALDTEVAS) form a coiled coil. In terms of domain architecture, FH1 spans 758 to 1268 (PPVDGLPGRP…VCGFLPPPLP (511 aa)). The tract at residues 797-1252 (QLDSHQPTQS…PPLLPQVGSS (456 aa)) is disordered. 2 stretches are compositionally biased toward polar residues: residues 821–838 (GQGQ…TEFQ) and 845–855 (VSSAFKNSCNI). Over residues 897-1246 (PQPPPLQGTE…LLPVSGPPLL (350 aa)) the composition is skewed to pro residues. The FH2 domain maps to 1283–1698 (RKQPIEPCRP…KEAEEVCRQK (416 aa)). Coiled-coil stretches lie at residues 1567 to 1597 (QASQ…AGKV) and 1677 to 1699 (KKEN…RQKK). An important for interaction with SPIRE1 region spans residues 1715-1722 (KAKISMKT).

This sequence belongs to the formin homology family. Cappuccino subfamily. In terms of assembly, interacts with SPIRE1. Binds actin. Interacts with CDKN1A. As to expression, expressed almost exclusively in the developing and mature central nervous system.

The protein resides in the cytoplasm. Its subcellular location is the cytoskeleton. It localises to the cytosol. It is found in the perinuclear region. The protein localises to the nucleus. The protein resides in the nucleolus. Its subcellular location is the cell membrane. It localises to the cytoplasmic vesicle membrane. It is found in the cell cortex. Its function is as follows. Actin-binding protein that is involved in actin cytoskeleton assembly and reorganization. Acts as an actin nucleation factor and promotes assembly of actin filaments together with SPIRE1 and SPIRE2. Involved in intracellular vesicle transport along actin fibers, providing a novel link between actin cytoskeleton dynamics and intracellular transport. Required for asymmetric spindle positioning, asymmetric oocyte division and polar body extrusion during female germ cell meiosis. Plays a role in responses to DNA damage, cellular stress and hypoxia by protecting CDKN1A against degradation, and thereby plays a role in stress-induced cell cycle arrest. Also acts in the nucleus: together with SPIRE1 and SPIRE2, promotes assembly of nuclear actin filaments in response to DNA damage in order to facilitate movement of chromatin and repair factors after DNA damage. Protects cells against apoptosis by protecting CDKN1A against degradation. In Homo sapiens (Human), this protein is Formin-2 (FMN2).